The sequence spans 520 residues: GMP synthase [glutamine-hydrolyzing] (520 aa).

In terms of domain architecture, Glutamine amidotransferase type-1 spans 12-205 (KIIVLDYGSQ…AISICGARGD (194 aa)). Catalysis depends on C89, which acts as the Nucleophile. Residues H179 and E181 contribute to the active site. Residues 206–395 (WSMDNFIDME…LGMPEEIVWR (190 aa)) form the GMPS ATP-PPase domain. 233-239 (SGGVDSS) is an ATP binding site.

Homodimer.

The catalysed reaction is XMP + L-glutamine + ATP + H2O = GMP + L-glutamate + AMP + diphosphate + 2 H(+). It participates in purine metabolism; GMP biosynthesis; GMP from XMP (L-Gln route): step 1/1. Functionally, catalyzes the synthesis of GMP from XMP. The protein is GMP synthase [glutamine-hydrolyzing] of Streptococcus pyogenes serotype M5 (strain Manfredo).